Here is a 119-residue protein sequence, read N- to C-terminus: Large ribosomal subunit protein bL20 (119 aa).

Belongs to the bacterial ribosomal protein bL20 family.

Functionally, binds directly to 23S ribosomal RNA and is necessary for the in vitro assembly process of the 50S ribosomal subunit. It is not involved in the protein synthesizing functions of that subunit. The sequence is that of Large ribosomal subunit protein bL20 from Xanthomonas oryzae pv. oryzae (strain KACC10331 / KXO85).